The following is a 90-amino-acid chain: Putative sodium channel toxin Ts28 (90 aa).

Positions methionine 1–glycine 23 are cleaved as a signal peptide. In terms of domain architecture, LCN-type CS-alpha/beta spans proline 26–aspartate 86. Disulfide bonds link cysteine 40–cysteine 60, cysteine 46–cysteine 65, and cysteine 50–cysteine 67.

This sequence belongs to the long (3 C-C) scorpion toxin superfamily. In terms of assembly, monomer (edited version) and heterodimer (non-edited version) of this alpha chain and a beta chain (AC P0CI43). As to expression, expressed by the venom gland.

It is found in the secreted. Functionally, the edited BmKBTx-like may modulate voltage-gated sodium channels (Nav). In terms of biological role, the non-edited form is able to form a heterodimer. In orthologs, a heterodimer with LVP beta-chain induces lipolysis in rat adipocytes, which is mediated through the beta-2 adrenergic receptor pathway (ADRB2). Since no LVP beta-chains have been identified in the venom of this scorpion, it is possible that this protein is not involved in a lipolysis process. The chain is Putative sodium channel toxin Ts28 from Tityus serrulatus (Brazilian scorpion).